A 204-amino-acid chain; its full sequence is High frequency lysogenization protein HflD homolog (204 aa).

Belongs to the HflD family.

Its subcellular location is the cytoplasm. The protein resides in the cell inner membrane. The polypeptide is High frequency lysogenization protein HflD homolog (Xylella fastidiosa (strain M23)).